We begin with the raw amino-acid sequence, 132 residues long: Protein FasE (132 aa).

This Escherichia coli protein is Protein FasE (fasE).